The chain runs to 201 residues: Recombination protein RecR (201 aa).

The segment at 57-72 (CKSCRTFTEEDECAIC) adopts a C4-type zinc-finger fold. The Toprim domain occupies 81–176 (GQLCVVEMPA…KVTRIAHGIP (96 aa)).

This sequence belongs to the RecR family.

Its function is as follows. May play a role in DNA repair. It seems to be involved in an RecBC-independent recombinational process of DNA repair. It may act with RecF and RecO. The protein is Recombination protein RecR of Glaesserella parasuis serovar 5 (strain SH0165) (Haemophilus parasuis).